Reading from the N-terminus, the 156-residue chain is Small ribosomal subunit protein uS7 (156 aa).

Belongs to the universal ribosomal protein uS7 family. As to quaternary structure, part of the 30S ribosomal subunit. Contacts proteins S9 and S11.

One of the primary rRNA binding proteins, it binds directly to 16S rRNA where it nucleates assembly of the head domain of the 30S subunit. Is located at the subunit interface close to the decoding center, probably blocks exit of the E-site tRNA. The polypeptide is Small ribosomal subunit protein uS7 (Mannheimia succiniciproducens (strain KCTC 0769BP / MBEL55E)).